Here is a 322-residue protein sequence, read N- to C-terminus: Large ribosomal subunit protein uL15m (322 aa).

A mitochondrion-targeting transit peptide spans 1-57 (MKAERQTGLRNSFTTVIGRKLINTFVPSMMLTSVAGNDIFFRGLFKSPVLAFQSYRY). Residues 69 to 99 (GSTKSFKRLGRGPSSGLGKTSGRGQKGQKAR) are disordered. Residues 81–93 (PSSGLGKTSGRGQ) show a composition bias toward gly residues.

This sequence belongs to the universal ribosomal protein uL15 family. As to quaternary structure, component of the mitochondrial large ribosomal subunit (mt-LSU). Mature yeast 74S mitochondrial ribosomes consist of a small (37S) and a large (54S) subunit. The 37S small subunit contains a 15S ribosomal RNA (15S mt-rRNA) and 34 different proteins. The 54S large subunit contains a 21S rRNA (21S mt-rRNA) and 46 different proteins.

It localises to the mitochondrion. Component of the mitochondrial ribosome (mitoribosome), a dedicated translation machinery responsible for the synthesis of mitochondrial genome-encoded proteins, including at least some of the essential transmembrane subunits of the mitochondrial respiratory chain. The mitoribosomes are attached to the mitochondrial inner membrane and translation products are cotranslationally integrated into the membrane. This is Large ribosomal subunit protein uL15m (MRPL10) from Saccharomyces cerevisiae (strain ATCC 204508 / S288c) (Baker's yeast).